The primary structure comprises 220 residues: Glutathione S-transferase 2 (220 aa).

The 87-residue stretch at 2-88 (VVTLGYWDIR…YIARKHNMCG (87 aa)) folds into the GST N-terminal domain. Residues 7–8 (YW), 43–46 (PSDW), Lys50, 59–60 (NL), and 72–73 (QS) contribute to the glutathione site. The region spanning 90–208 (TEVEKQRVDV…RSGRFMKAPI (119 aa)) is the GST C-terminal domain. Tyr116 contacts substrate.

Belongs to the GST superfamily. Mu family. As to quaternary structure, homodimer.

It is found in the cytoplasm. The catalysed reaction is RX + glutathione = an S-substituted glutathione + a halide anion + H(+). In terms of biological role, conjugation of reduced glutathione to a wide number of exogenous and endogenous hydrophobic electrophiles. Participates in the formation of novel hepoxilin regioisomers. This Gallus gallus (Chicken) protein is Glutathione S-transferase 2 (GSTM2).